A 227-amino-acid chain; its full sequence is Cytochrome c oxidase subunit 2 (227 aa).

Residues 1–14 (MAHPVQLGLQDATS) are Mitochondrial intermembrane-facing. The chain crosses the membrane as a helical span at residues 15–45 (PVMEELITFHDQALMAMFLISFLILYALSST). Topologically, residues 46 to 59 (LTTKLTNTNITDAQ) are mitochondrial matrix. A helical transmembrane segment spans residues 60–87 (EMETIWTILPAVILILIALPSLRILYMT). Over 88-227 (DEINNPSFTI…IFEMGPVFTL (140 aa)) the chain is Mitochondrial intermembrane. Residues His161, Cys196, Glu198, Cys200, His204, and Met207 each contribute to the Cu cation site. Glu198 provides a ligand contact to Mg(2+).

It belongs to the cytochrome c oxidase subunit 2 family. As to quaternary structure, component of the cytochrome c oxidase (complex IV, CIV), a multisubunit enzyme composed of 14 subunits. The complex is composed of a catalytic core of 3 subunits MT-CO1, MT-CO2 and MT-CO3, encoded in the mitochondrial DNA, and 11 supernumerary subunits COX4I, COX5A, COX5B, COX6A, COX6B, COX6C, COX7A, COX7B, COX7C, COX8 and NDUFA4, which are encoded in the nuclear genome. The complex exists as a monomer or a dimer and forms supercomplexes (SCs) in the inner mitochondrial membrane with NADH-ubiquinone oxidoreductase (complex I, CI) and ubiquinol-cytochrome c oxidoreductase (cytochrome b-c1 complex, complex III, CIII), resulting in different assemblies (supercomplex SCI(1)III(2)IV(1) and megacomplex MCI(2)III(2)IV(2)). Found in a complex with TMEM177, COA6, COX18, COX20, SCO1 and SCO2. Interacts with TMEM177 in a COX20-dependent manner. Interacts with COX20. Interacts with COX16. Cu cation is required as a cofactor.

The protein resides in the mitochondrion inner membrane. It carries out the reaction 4 Fe(II)-[cytochrome c] + O2 + 8 H(+)(in) = 4 Fe(III)-[cytochrome c] + 2 H2O + 4 H(+)(out). Its function is as follows. Component of the cytochrome c oxidase, the last enzyme in the mitochondrial electron transport chain which drives oxidative phosphorylation. The respiratory chain contains 3 multisubunit complexes succinate dehydrogenase (complex II, CII), ubiquinol-cytochrome c oxidoreductase (cytochrome b-c1 complex, complex III, CIII) and cytochrome c oxidase (complex IV, CIV), that cooperate to transfer electrons derived from NADH and succinate to molecular oxygen, creating an electrochemical gradient over the inner membrane that drives transmembrane transport and the ATP synthase. Cytochrome c oxidase is the component of the respiratory chain that catalyzes the reduction of oxygen to water. Electrons originating from reduced cytochrome c in the intermembrane space (IMS) are transferred via the dinuclear copper A center (CU(A)) of subunit 2 and heme A of subunit 1 to the active site in subunit 1, a binuclear center (BNC) formed by heme A3 and copper B (CU(B)). The BNC reduces molecular oxygen to 2 water molecules using 4 electrons from cytochrome c in the IMS and 4 protons from the mitochondrial matrix. In Papio anubis (Olive baboon), this protein is Cytochrome c oxidase subunit 2 (MT-CO2).